Reading from the N-terminus, the 790-residue chain is Solute carrier family 26 member 9 (790 aa).

The Cytoplasmic portion of the chain corresponds to 1 to 70; it reads MNQPRPRYVV…WLPKYKIKDY (70 aa). The chain crosses the membrane as a helical span at residues 71-96; it reads IIPDLLGGLSGGCIQVPQGMAFALLA. The Extracellular portion of the chain corresponds to 97 to 100; that stretch reads NLPA. A helical transmembrane segment spans residues 101–109; it reads VNGLYSSFF. The Cytoplasmic segment spans residues 110–129; that stretch reads PLLTYFFLGGIHQMVPGTFA. Residues 130 to 142 traverse the membrane as a helical segment; the sequence is VISILVGNICLQL. The Extracellular segment spans residues 143 to 162; it reads APESKFQIFNNVTNETYVDT. A helical membrane pass occupies residues 163 to 191; the sequence is AAMEAERLHVSATLACLTAVIQMALGFMQ. The Cytoplasmic segment spans residues 192–201; the sequence is FGFVAIYLSE. A helical membrane pass occupies residues 202 to 224; it reads SFIRGFMTAAGLQILISVLKYIF. Over 225–237 the chain is Extracellular; that stretch reads GLTIPSYTGPGSI. Positions 238–246 form an intramembrane region, helical; sequence VFTFIDICK. The Extracellular segment spans residues 247 to 254; that stretch reads NLPHTNIA. The chain crosses the membrane as a helical span at residues 255 to 275; the sequence is SLIFALVSGVFLVLVKELNAR. Residues 276–286 are Cytoplasmic-facing; that stretch reads YMHKIHFPIPT. The chain crosses the membrane as a helical span at residues 287 to 299; sequence EMIVVVVATAISG. Topologically, residues 300-334 are extracellular; sequence SCKMPKKYHMQIVGEIRQGFPTPVAPMVSQWKGMV. The chain crosses the membrane as a helical span at residues 335 to 358; that stretch reads GTAFSLAIVGYVINLAMGRTLASK. Topologically, residues 359–365 are cytoplasmic; it reads HGYDVDS. The helical transmembrane segment at 366–379 threads the bilayer; the sequence is NQEMIALGCSNFFG. Over 380-390 the chain is Extracellular; that stretch reads SFFKIHVICCA. Residues 391–400 form a helical membrane-spanning segment; the sequence is LSVTLAVDGA. Residues 401–405 are Cytoplasmic-facing; sequence GGKSQ. The chain crosses the membrane as a helical span at residues 406 to 419; that stretch reads VASLCVSLVVMITM. The Extracellular portion of the chain corresponds to 420–431; that stretch reads LVLGSYLYPLPK. The helical transmembrane segment at 432–457 threads the bilayer; it reads AVLGALIAVNLKNSLKQLTDPYYLWR. At 458–461 the chain is on the cytoplasmic side; the sequence is KSKL. Residues 462–476 traverse the membrane as a helical segment; sequence DCCVWVVSFLSSFFL. Topologically, residues 477-479 are extracellular; sequence SLP. Residues 480-498 traverse the membrane as a helical segment; the sequence is YGVAVGVAFSILVVIFQTQ. The Cytoplasmic segment spans residues 499–790; that stretch reads FRNGSTLAQV…MFHTETLTAL (292 aa). Positions 519–737 constitute an STAS domain; it reads TYNRAQEIAG…PSIHDAVLFA (219 aa).

It belongs to the SLC26A/SulP transporter (TC 2.A.53) family. In terms of assembly, homodimer. In terms of tissue distribution, expressed in stomach and trachea. Abundantly expressed in the apical domain of the surface epithelial cells and the deep cells in the gastric gland. Also expressed in heart, brain, lung and liver.

It is found in the cell membrane. It localises to the endomembrane system. It catalyses the reaction chloride(in) = chloride(out). The enzyme catalyses hydrogencarbonate(in) + chloride(out) = hydrogencarbonate(out) + chloride(in). Inhibited by ammonium and thiosulfate. In terms of biological role, ion transporter that can act both as an ion channel and anion exchanger. Mainly acts as a chloride channel, which mediate uncoupled chloride anion transport in an alternate-access mechanism where a saturable binding site is alternately exposed to either one or the other side of the membrane. Also acts as a DIDS- and thiosulfate- sensitive anion exchanger the exchange of chloride for bicarbonate ions across the cell membrane. In Mus musculus (Mouse), this protein is Solute carrier family 26 member 9.